The chain runs to 423 residues: Glutaminase (423 aa).

A glutaminase region spans residues 27–312 (GEVAQYIPQL…LSEDMGLHLM (286 aa)). Substrate is bound by residues serine 69, asparagine 119, glutamate 165, asparagine 172, tyrosine 196, tyrosine 248, and valine 266. Positions 321 to 423 (AVRAIEERGD…SPQVDDPEEL (103 aa)) constitute an STAS domain.

This sequence belongs to the glutaminase family. Homotetramer.

The enzyme catalyses L-glutamine + H2O = L-glutamate + NH4(+). The sequence is that of Glutaminase (glsA) from Corynebacterium efficiens (strain DSM 44549 / YS-314 / AJ 12310 / JCM 11189 / NBRC 100395).